A 397-amino-acid polypeptide reads, in one-letter code: Antiviral protein SKI8 (397 aa).

WD repeat units lie at residues 21-42 (SVSA…KVWD), 67-101 (HVDV…ITRE), 126-157 (ALKW…KFHP), 191-213 (SVDI…QISE), 238-264 (SVKF…TLYE), 296-319 (SLSF…RFWD), and 359-392 (DVKF…RWFR).

This sequence belongs to the SKI8 family. In terms of assembly, component of the SKI complex composed of at least SKI2, SKI3 and SKI8. The SKI complex interacts with SKI7, which makes the link between the SKI complex and the exosome in order to perform mRNA degradation.

Its subcellular location is the cytoplasm. The protein resides in the nucleus. It is found in the chromosome. Involved in double-strand break (DSB) formation during meiotic recombination through stabilization of SPO11 association with meiotic chromosome and helping SPO11 to recruit other DSB proteins like REC102 and REC104 to meiotic chromosomes. Also a component of the SKI complex involved in 3'-mRNA degradation pathway. Represses dsRNA virus propagation by specifically blocking translation of viral mRNAs, perhaps recognizing the absence of CAP or poly(A). Essential for controlling the propagation of M double-stranded RNA (dsRNA) and thus for preventing virus-induced cytopathology. In Saccharomyces cerevisiae (strain ATCC 204508 / S288c) (Baker's yeast), this protein is Antiviral protein SKI8 (SKI8).